Reading from the N-terminus, the 396-residue chain is Ribosomal RNA large subunit methyltransferase I (396 aa).

The 78-residue stretch at 2–79 (SVRLVLAKGR…QAESIDIAFF (78 aa)) folds into the PUA domain.

Belongs to the methyltransferase superfamily. RlmI family.

The protein localises to the cytoplasm. The enzyme catalyses cytidine(1962) in 23S rRNA + S-adenosyl-L-methionine = 5-methylcytidine(1962) in 23S rRNA + S-adenosyl-L-homocysteine + H(+). In terms of biological role, specifically methylates the cytosine at position 1962 (m5C1962) of 23S rRNA. This chain is Ribosomal RNA large subunit methyltransferase I, found in Citrobacter koseri (strain ATCC BAA-895 / CDC 4225-83 / SGSC4696).